Consider the following 173-residue polypeptide: Archaemetzincin (173 aa).

H130 contacts Zn(2+). Residue E131 is the Proton acceptor of the active site. H134, H140, C141, C146, C165, and C168 together coordinate Zn(2+).

Belongs to the peptidase M54 family. Monomer. Zn(2+) serves as cofactor.

Its function is as follows. Probable zinc metalloprotease whose natural substrate is unknown. In Natronomonas pharaonis (strain ATCC 35678 / DSM 2160 / CIP 103997 / JCM 8858 / NBRC 14720 / NCIMB 2260 / Gabara) (Halobacterium pharaonis), this protein is Archaemetzincin.